Reading from the N-terminus, the 631-residue chain is Forkhead box protein O1 (631 aa).

A compositionally biased stretch (pro residues) spans 1–11 (MAEAPQPPPPL). 4 disordered regions span residues 1–57 (MAEA…PAAG), 90–147 (DIRQ…SRRN), 223–324 (SSWW…MPEQ), and 372–404 (PNSS…PNSE). 2 stretches are compositionally biased toward low complexity: residues 37–48 (NPSSSANSSPAP) and 100–135 (QQQQ…PLGA). Positions 149–243 (WGNLSYADLI…KNGKSPRRRA (95 aa)) form a DNA-binding region, fork-head. Residues 253 to 264 (AKSRGRAAKKKA) are compositionally biased toward basic residues. Low complexity predominate over residues 265–282 (SMQSSQDGSSDSPGSQFS). 2 stretches are compositionally biased toward polar residues: residues 303 to 315 (RPRT…TISG) and 381 to 403 (ASMM…SPNS).

Post-translationally, phosphorylated by AKT1; insulin-induced. In terms of processing, IGF1 rapidly induces phosphorylation of Thr-28, Ser-245 and Ser-308. Phosphorylation of Ser-245 decreases DNA-binding activity and promotes the phosphorylation of Thr-28, and Ser-308, which leads to nuclear exclusion and loss of function. Phosphorylation of Ser-318 is independent of IGF1 and leads to reduced function. Localized to the animal hemisphere during early cleavage stages. At early tadpole stages, expressed in the branchial arches, pronephros and liver. Within the head, expressed in the forming thyroid gland and in head mesenchyme anterior to the eyes.

It is found in the cytoplasm. It localises to the nucleus. Transcription factor that regulates metabolic homeostasis in response to oxidative stress. Binds to the consensus sequence 5'-TT[G/A]TTTTG-3' and the related Daf-16 family binding element (DBE) with consensus sequence 5'-TT[G/A]TTTAC-3'. Main regulator of redox balance and osteoblast numbers and controls bone mass. Orchestrates the endocrine function of the skeleton in regulating glucose metabolism. Also acts as a key regulator of chondrogenic commitment of skeletal progenitor cells in response to lipid availability: when lipids levels are low, translocates to the nucleus and promotes expression of sox9, which induces chondrogenic commitment and suppresses fatty acid oxidation. Acts synergistically with atf4 to suppress osteocalcin/bglap activity, increasing glucose levels and triggering glucose intolerance and insulin insensitivity. Also suppresses the transcriptional activity of runx2, an upstream activator of osteocalcin/bglap. May act as a positive regulator of apoptosis in cardiac smooth muscle cells as a result of its transcriptional activation of pro-apoptotic genes. The polypeptide is Forkhead box protein O1 (Xenopus laevis (African clawed frog)).